A 317-amino-acid polypeptide reads, in one-letter code: Melanocyte-stimulating hormone receptor (317 aa).

At 1-37 (MPMQEPQRRLLDPFNSTRTGTPHLKLSANQTGPWCLH) the chain is on the extracellular side. 2 N-linked (GlcNAc...) asparagine glycosylation sites follow: N15 and N29. A helical membrane pass occupies residues 38–63 (VSIPDGLFLSLGLVSLVENVLVVISI). Topologically, residues 64 to 72 (AKNRNLHSP) are cytoplasmic. The chain crosses the membrane as a helical span at residues 73–93 (MYYFICCLALSDLLVSVSIVL). Topologically, residues 94-118 (ETTLILVLEAGALATRVTVVQQLDN) are extracellular. The helical transmembrane segment at 119 to 140 (VIDVLICGSMVSSLCFLGAIAV) threads the bilayer. Topologically, residues 141–163 (DRYISIFYALRYHSIVTLPRARW) are cytoplasmic. The chain crosses the membrane as a helical span at residues 164 to 183 (AIVAIWVASISSSTLFVAYY). Residues 184–191 (NHTAVLLC) lie on the Extracellular side of the membrane. The helical transmembrane segment at 192 to 211 (LVTFFLATLALMAVLYVHML) threads the bilayer. Over 212–240 (ARAHQHAQAIAQLHKRQHLVHQGFRLKGA) the chain is Cytoplasmic. The chain crosses the membrane as a helical span at residues 241-266 (ATLTILLGIFFLCWGPFFLYLTLIVL). Over 267–279 (CPKHPTCSCFFKN) the chain is Extracellular. The chain crosses the membrane as a helical span at residues 280–300 (LNLFLALIIFNSIVDPLIYAF). The Cytoplasmic portion of the chain corresponds to 301–317 (RSQELRMTLKEVLLCSW). Residue C315 is the site of S-palmitoyl cysteine attachment.

It belongs to the G-protein coupled receptor 1 family. As to quaternary structure, interacts with MGRN1, but does not undergo MGRN1-mediated ubiquitination; this interaction competes with GNAS-binding and thus inhibits agonist-induced cAMP production. Interacts with OPN3; the interaction results in a decrease in MC1R-mediated cAMP signaling and ultimately a decrease in melanin production in melanocytes.

It localises to the cell membrane. In terms of biological role, receptor for MSH (alpha, beta and gamma) and ACTH. The activity of this receptor is mediated by G proteins which activate adenylate cyclase. Mediates melanogenesis, the production of eumelanin (black/brown) and phaeomelanin (red/yellow), via regulation of cAMP signaling in melanocytes. This Chaetodipus baileyi (Bailey's pocket mouse) protein is Melanocyte-stimulating hormone receptor (MC1R).